We begin with the raw amino-acid sequence, 157 residues long: MKTPLITREGYETLKQELNYLWREERPEVTKKVTWAASLGDRSENADYQYNKKRLREIDRRVRYLTKCMENLKIVDYSPQQEGKVFFGAWVEIENDDGDTLKFRIVGYDEIFGRKDYISIDSPMARALLKKEVGDLAVVNTPVGEANWYVNAIEYVK.

Belongs to the GreA/GreB family. GreB subfamily.

Functionally, necessary for efficient RNA polymerase transcription elongation past template-encoded arresting sites. The arresting sites in DNA have the property of trapping a certain fraction of elongating RNA polymerases that pass through, resulting in locked ternary complexes. Cleavage of the nascent transcript by cleavage factors such as GreA or GreB allows the resumption of elongation from the new 3'terminus. GreB releases sequences of up to 9 nucleotides in length. This Salmonella typhi protein is Transcription elongation factor GreB.